The following is a 141-amino-acid chain: Envelope protein A28 homolog (141 aa).

The chain crosses the membrane as a helical; Signal-anchor for type II membrane protein span at residues 1–21 (MNPTSIVLIVIATVAVCLIIM). Residues 22–141 (QIYYIYENYD…QDCIFLKSVI (120 aa)) lie on the Virion surface side of the membrane.

This sequence belongs to the poxviridae A28 protein family. Post-translationally, contains two intramolecular disulfide bonds. They are created by the viral disulfide bond formation pathway, a poxvirus-specific pathway that operates on the cytoplasmic side of the MV membranes.

It is found in the virion membrane. Functionally, envelope protein required for virus entry into host cell and for cell-cell fusion (syncytium formation). The chain is Envelope protein A28 homolog from Erythrocebus patas (Red guenon).